We begin with the raw amino-acid sequence, 462 residues long: MEKIVGLCKRRGFVFPSSEIYGGQGGVWDYGPMGIALKNNIAHAWWQDMTRLHDHIVGLDAAILMHPNVWRTSGHVDHFSDPLVDCTVCKSRFRADQVAVPSAGGPCPQCGGALTGVRNFNLMFSTHMGPTDERASLLYLRPETAQGIYVNYKNVLQTTRLKVPFGIAQIGKAFRNEIVTKNFIFRTCEFEQMEMQFFVRPAEDTHWFEYWCAQRWAFYQKYGVRMNHMRWRTHAAHELAHYARAACDIEYAFPMGFRELEGVHNRGDFDLTRHAQHSGKDLCYVDPDPNLDAAARRYVPCVVETSAGLTRCVLMFLCDAYTEEYVQAPNVAFSETTQTADQEGAARTGEMRIVLRLHPALSPTTVAFLPLVKKDGLVDLARAVRDELREDFACDFDAAGAIGKRYRRQDEVGTPFCVTVDYQSKEDDTVTVRLRDSMAQRRVSRAFLAEFLRTEIKHYRRP.

Residues Arg94 and Glu143 each contribute to the substrate site. Residues 175–177 (RNE), 185–190 (FRTCEF), 259–260 (EL), and 308–311 (GLTR) each bind ATP. A substrate-binding site is contributed by 190 to 194 (FEQME). Residue 304-308 (ETSAG) participates in substrate binding.

It belongs to the class-II aminoacyl-tRNA synthetase family. In terms of assembly, homodimer.

It is found in the cytoplasm. The enzyme catalyses tRNA(Gly) + glycine + ATP = glycyl-tRNA(Gly) + AMP + diphosphate. In terms of biological role, catalyzes the attachment of glycine to tRNA(Gly). The polypeptide is Glycine--tRNA ligase (Treponema pallidum (strain Nichols)).